Here is a 517-residue protein sequence, read N- to C-terminus: Membrane-bound lytic murein transglycosylase F (517 aa).

A signal peptide spans 1–32; sequence MKKFKINYLLIGIVTLLLAAALWPSIPWFGKA. Positions 33–269 are non-LT domain; sequence ENRIAAIQSR…RLEEKYLGHG (237 aa). Residues 270 to 517 are LT domain; it reads GDFDYVDTRS…PNTLVQAPRR (248 aa). Residue E314 is part of the active site.

The protein in the N-terminal section; belongs to the bacterial solute-binding protein 3 family. This sequence in the C-terminal section; belongs to the transglycosylase Slt family.

It localises to the cell outer membrane. It catalyses the reaction Exolytic cleavage of the (1-&gt;4)-beta-glycosidic linkage between N-acetylmuramic acid (MurNAc) and N-acetylglucosamine (GlcNAc) residues in peptidoglycan, from either the reducing or the non-reducing ends of the peptidoglycan chains, with concomitant formation of a 1,6-anhydrobond in the MurNAc residue.. In terms of biological role, murein-degrading enzyme that degrades murein glycan strands and insoluble, high-molecular weight murein sacculi, with the concomitant formation of a 1,6-anhydromuramoyl product. Lytic transglycosylases (LTs) play an integral role in the metabolism of the peptidoglycan (PG) sacculus. Their lytic action creates space within the PG sacculus to allow for its expansion as well as for the insertion of various structures such as secretion systems and flagella. The polypeptide is Membrane-bound lytic murein transglycosylase F (Enterobacter sp. (strain 638)).